A 295-amino-acid polypeptide reads, in one-letter code: NAD kinase (295 aa).

The active-site Proton acceptor is Asp74. NAD(+) contacts are provided by residues 74–75 (DG), 148–149 (NE), Arg176, Asp178, and 189–194 (TAYAMS).

This sequence belongs to the NAD kinase family. It depends on a divalent metal cation as a cofactor.

It localises to the cytoplasm. The enzyme catalyses NAD(+) + ATP = ADP + NADP(+) + H(+). In terms of biological role, involved in the regulation of the intracellular balance of NAD and NADP, and is a key enzyme in the biosynthesis of NADP. Catalyzes specifically the phosphorylation on 2'-hydroxyl of the adenosine moiety of NAD to yield NADP. The sequence is that of NAD kinase from Acidithiobacillus ferrooxidans (strain ATCC 23270 / DSM 14882 / CIP 104768 / NCIMB 8455) (Ferrobacillus ferrooxidans (strain ATCC 23270)).